The primary structure comprises 320 residues: MAFPKKKLRGLVAATITPMTENGEINFPVIGQYVDYLVKEQGVKNIFVNGTTGEGLSLSVSERRQVAEEWVNQGRNKLDQVVIHVGALNVKESQELAQHAAEIGADGIAVIAPFFFKSQNKDALISFLREVAAAAPTLPFYYYHMPSMTGVKIRAEELLDGIQDKIPTFQGLKFTDTDLLDFGQCVDQNHQRQFALLFGVDEQLLSALVMGATGAVGSTYNYLGKKTNQMLEAFEQKDLASALSYQFRIQRFINYVIKLGFGVSQTKAIMTLVSGIPMGPPRLPLQKATQEFTAKAEAKLKSLDFLSSPSVKEGKPLASA.

Residues T51 and T52 each coordinate aceneuramate. Y143 acts as the Proton donor in catalysis. The active-site Schiff-base intermediate with substrate is the K173. Aceneuramate is bound by residues T175, G199, D201, E202, and S218. S308 bears the Phosphoserine mark.

The protein belongs to the DapA family. NanA subfamily. In terms of assembly, homotetramer.

It localises to the cytoplasm. It catalyses the reaction aceneuramate = aldehydo-N-acetyl-D-mannosamine + pyruvate. It participates in amino-sugar metabolism; N-acetylneuraminate degradation. Functionally, catalyzes the cleavage of N-acetylneuraminic acid (sialic acid) to form pyruvate and N-acetylmannosamine via a Schiff base intermediate. It prevents sialic acids from being recycled and returning to the cell surface. Involved in the N-glycolylneuraminic acid (Neu5Gc) degradation pathway. The sequence is that of N-acetylneuraminate lyase from Mus musculus (Mouse).